The sequence spans 216 residues: Uracil phosphoribosyltransferase (216 aa).

30-34 provides a ligand contact to GTP; the sequence is KNLVR. 5-phospho-alpha-D-ribose 1-diphosphate-binding positions include Arg-80, Arg-105, and 140–148; that span reads DPMIATAST. Residues Ile-203 and 208-210 each bind uracil; that span reads GDA. Asp-209 serves as a coordination point for 5-phospho-alpha-D-ribose 1-diphosphate.

Belongs to the UPRTase family. Requires Mg(2+) as cofactor.

It catalyses the reaction UMP + diphosphate = 5-phospho-alpha-D-ribose 1-diphosphate + uracil. The protein operates within pyrimidine metabolism; UMP biosynthesis via salvage pathway; UMP from uracil: step 1/1. Its activity is regulated as follows. Allosterically activated by GTP. Its function is as follows. Catalyzes the conversion of uracil and 5-phospho-alpha-D-ribose 1-diphosphate (PRPP) to UMP and diphosphate. This is Uracil phosphoribosyltransferase from Saccharolobus islandicus (strain Y.N.15.51 / Yellowstone #2) (Sulfolobus islandicus).